The primary structure comprises 554 residues: DM7 family protein GG17593 (554 aa).

Belongs to the DM7 family.

This Drosophila erecta (Fruit fly) protein is DM7 family protein GG17593.